We begin with the raw amino-acid sequence, 281 residues long: Putative rRNA methyltransferase YqxC (281 aa).

The region spanning 6-67 (ERLDVLLVER…NPLRYVSRGG (62 aa)) is the S4 RNA-binding domain.

It belongs to the TlyA family.

The polypeptide is Putative rRNA methyltransferase YqxC (yqxC) (Bacillus subtilis (strain 168)).